A 334-amino-acid chain; its full sequence is D-fructose 1,6-bisphosphatase class 2/sedoheptulose 1,7-bisphosphatase (334 aa).

Mn(2+) is bound by residues Asp-33, Glu-57, Asp-85, and Glu-88. Residues 88–90, Tyr-119, 164–166, and 186–188 each bind substrate; these read EGT, RAR, and DGD. Glu-213 is a binding site for Mn(2+).

This sequence belongs to the FBPase class 2 family. Homotetramer. Requires Mn(2+) as cofactor.

The catalysed reaction is beta-D-fructose 1,6-bisphosphate + H2O = beta-D-fructose 6-phosphate + phosphate. The enzyme catalyses D-sedoheptulose 1,7-bisphosphate + H2O = D-sedoheptulose 7-phosphate + phosphate. The protein operates within carbohydrate biosynthesis; Calvin cycle. In terms of biological role, catalyzes the hydrolysis of fructose 1,6-bisphosphate (Fru 1,6-P2) and sedoheptulose 1,7-bisphosphate (Sed 1,7-P2) to fructose 6-phosphate and sedoheptulose 7-phosphate, respectively. This is D-fructose 1,6-bisphosphatase class 2/sedoheptulose 1,7-bisphosphatase from Synechococcus sp. (strain CC9311).